The chain runs to 223 residues: Pre-protein VI (223 aa).

Positions Met1–Gly27 are excised as a propeptide. Positions Phe28–Thr51 are amphipathic alpha-helix essential for membrane lytic activity. Positions Ser29–Ser50 are involved in endosomal membrane lysis. Interaction with hexon protein regions lie at residues Gly45–Ser71 and Leu206–Asp212. 2 short sequence motifs (nuclear export signal) span residues Ala64–Val73 and Ser204–Cys215. A binds to importin alpha/beta, involved in hexon nuclear import region spans residues Gly213–Tyr223.

This sequence belongs to the adenoviridae protein VI family. Interacts with hexon protein; this interaction allows nuclear import of hexon trimers and possibly pre-capsid assembly. Interacts (via C-terminal NLS) with importin alpha/beta. As to quaternary structure, interacts (via PPxY motif) with host NEDD4 ubiquitine ligase; this interaction might play a role in virus intracellular transport during entry. Part of a complex composed of the core-capsid bridging protein, the endosome lysis protein VI and the hexon-linking protein VIII; these interactions bridge the virus core to the capsid. Interacts with peripentonal hexons; this interaction stabilizes the capsid by gluing two peripentonal hexons together and joining them with an adjacent group-of-nine hexon. In terms of assembly, heterodimer with the viral protease; disulfide-linked. Interacts with the viral protease. In terms of processing, ubiquitinated by Nedd4 following partial capsid disassembly; which might play a role in intracellular virus movement during entry. Post-translationally, contains the major nuclear import and export signals. Proteolytically removed during virion maturation. The processing of the C-terminus turns the precursor into a mature viral structural protein and abrogates its ability to promote hexon import and act as a potential chaperone protein.

It localises to the host nucleus. Its subcellular location is the host cytoplasm. The protein localises to the virion. Its function is as follows. During virus assembly, promotes hexon trimers nuclear import through nuclear pore complexes via an importin alpha/beta-dependent mechanism. By analogy to herpesviruses capsid assembly, might act as a chaperone to promote the formation of the icosahedral capsid. Structural component of the virion that provides increased stability to the particle shell through its interaction with the core-capsid bridging protein and the hexon-linking protein VIII. Fibers shedding during virus entry into host cell allows the endosome lysis protein to be exposed as a membrane-lytic peptide. Exhibits pH-independent membrane fragmentation activity and probably mediates viral rapid escape from host endosome via organellar membrane lysis. It is not clear if it then remains partially associated with the capsid and involved in the intracellular microtubule-dependent transport of capsid to the nucleus, or if it is lost during endosomal penetration. In terms of biological role, cofactor that activates the viral protease. Binds to viral protease in a 1:1 ratio. The chain is Pre-protein VI from Pantherophis guttatus (Corn snake).